Consider the following 275-residue polypeptide: tRNA pseudouridine synthase B (275 aa).

Residue Asp38 is the Nucleophile of the active site.

Belongs to the pseudouridine synthase TruB family. Type 1 subfamily.

The catalysed reaction is uridine(55) in tRNA = pseudouridine(55) in tRNA. In terms of biological role, responsible for synthesis of pseudouridine from uracil-55 in the psi GC loop of transfer RNAs. The polypeptide is tRNA pseudouridine synthase B (Nitratiruptor sp. (strain SB155-2)).